Here is a 263-residue protein sequence, read N- to C-terminus: Hydroxyacylglutathione hydrolase (263 aa).

Residues H55, H57, D59, H60, H117, D134, and H172 each contribute to the Zn(2+) site.

Belongs to the metallo-beta-lactamase superfamily. Glyoxalase II family. As to quaternary structure, monomer. Zn(2+) is required as a cofactor.

It catalyses the reaction an S-(2-hydroxyacyl)glutathione + H2O = a 2-hydroxy carboxylate + glutathione + H(+). Its pathway is secondary metabolite metabolism; methylglyoxal degradation; (R)-lactate from methylglyoxal: step 2/2. Functionally, thiolesterase that catalyzes the hydrolysis of S-D-lactoyl-glutathione to form glutathione and D-lactic acid. The sequence is that of Hydroxyacylglutathione hydrolase from Shewanella baltica (strain OS185).